We begin with the raw amino-acid sequence, 384 residues long: MATGDVKGCIRKLEQRLRTLNYPRDVDYTGLIKGDPSASLPIISYTFTCYSTSIAEILISFGIELTTKSDLRFIEAVYKVLRDVFNYKPILTKQQFLQCAFSERKIQIICDIVDCVVKKHKEITGQNKVKSQLVKKVVSAKDQCEVFYPEDVSVQPSVKTTQKKPLVERHAGSEFLLPTKCYSSALVEDIEEEEPTSDSEGGSHLEHEMESPFETAETTPNSEQIELLRKQLAECQEKLQRLDCVEQRLQSLETSMKGKIIIDETDWNNLLSRVLLLETEGLLQSKKTDFSVPSEFACISEQRTSSRMTNEICSNLKTKADIPESHHQSSGYSFVLSADTSPIAIDINYSSLTEDSNETTKQRMERITKMMEETSKLLKCSNNT.

The interval 11 to 188 (RKLEQRLRTL…TKCYSSALVE (178 aa)) is binds with microtubules and centrioles. A disordered region spans residues 191–222 (EEEEPTSDSEGGSHLEHEMESPFETAETTPNS). The span at 201-210 (GGSHLEHEME) shows a compositional bias: basic and acidic residues. Coiled-coil stretches lie at residues 221 to 260 (NSEQ…KGKI) and 353 to 378 (TEDS…SKLL).

Binds to centriolar microtubules.

Its subcellular location is the cytoplasm. It localises to the cytoskeleton. The protein localises to the microtubule organizing center. The protein resides in the centrosome. It is found in the centriole. Its subcellular location is the spindle pole. It localises to the midbody. In terms of biological role, centriole-enriched microtubule-binding protein involved in centriole biogenesis. In collaboration with CEP295 and POC1B, is required for the centriole-to-centrosome conversion by ensuring the formation of bona fide centriole wall. Functions as a linker component that maintains centrosome cohesion. Associates with CROCC and regulates its stability and localization to the centrosome. This is Centrosomal protein of 44 kDa (cep44) from Xenopus laevis (African clawed frog).